The chain runs to 520 residues: MNLKQEVESRKTFAIISHPDAGKTTLTEKLLYFSGAIREAGTVKGKKTGKFATSDWMKVEQERGISVTSSVMQFDYDDYKINILDTPGHEDFSEDTYRTLMAVDSAVMVIDCAKGIEPQTLKLFKVCKMRGIPIFTFINKLDRVGKEPFELLDEIEETLNIETYPMNWPIGMGQSFFGIIDRKSKTIEPFRDEENILHLNDDFELEEDHAITNDSDFEQAIEELMLVEEAGEAFDNDALLSGDLTPVFFGSALANFGVQNFLNAYVDFAPMPNARQTKEDVEVSPFDDSFSGFIFKIQANMDPKHRDRIAFMRVVSGAFERGMDVTLQRTNKKQKITRSTSFMADDKETVNHAVAGDIIGLYDTGNYQIGDTLVGGKQTYSFQDLPQFTPEIFMKVSAKNVMKQKHFHKGIEQLVQEGAIQYYKTLHTNQIILGAVGQLQFEVFEHRMKNEYNVDVVMEPVGRKIARWIENEDQITDKMNTSRSILVKDRYDDLVFLFENEFATRWFEEKFPEIKLYSLL.

A tr-type G domain is found at 8-277 (ESRKTFAIIS…FAPMPNARQT (270 aa)). Residues 17 to 24 (SHPDAGKT), 85 to 89 (DTPGH), and 139 to 142 (NKLD) each bind GTP.

The protein belongs to the TRAFAC class translation factor GTPase superfamily. Classic translation factor GTPase family. PrfC subfamily.

The protein resides in the cytoplasm. Increases the formation of ribosomal termination complexes and stimulates activities of RF-1 and RF-2. It binds guanine nucleotides and has strong preference for UGA stop codons. It may interact directly with the ribosome. The stimulation of RF-1 and RF-2 is significantly reduced by GTP and GDP, but not by GMP. This chain is Peptide chain release factor 3, found in Staphylococcus aureus (strain USA300 / TCH1516).